We begin with the raw amino-acid sequence, 145 residues long: Hemoglobin subunit beta-3 (145 aa).

The region spanning 1–145 (MLTAEEKAAV…VANALAHRYH (145 aa)) is the Globin domain. Thr-11 carries the phosphothreonine modification. At Lys-58 the chain carries N6-acetyllysine. Residue His-62 coordinates heme b. N6-acetyllysine is present on Lys-81. Residue His-91 coordinates heme b. Cys-92 carries the S-nitrosocysteine modification.

It belongs to the globin family. In terms of assembly, heterotetramer of two alpha chains and two beta chains. As to expression, red blood cells.

In terms of biological role, involved in oxygen transport from the lung to the various peripheral tissues. This is Hemoglobin subunit beta-3 (HBB) from Odocoileus virginianus virginianus (Virginia white-tailed deer).